Reading from the N-terminus, the 362-residue chain is Dihydroorotate dehydrogenase (quinone) (362 aa).

FMN is bound by residues 62–66 (AGYDK) and Thr-86. Substrate is bound at residue Lys-66. 111 to 115 (NRLGF) provides a ligand contact to substrate. Residues Asn-139 and Asn-170 each contribute to the FMN site. Residue Asn-170 participates in substrate binding. The active-site Nucleophile is the Ser-173. Asn-175 serves as a coordination point for substrate. FMN is bound by residues Lys-215 and Ser-243. 244–245 (NT) provides a ligand contact to substrate. FMN-binding positions include Gly-266, Gly-295, and 316–317 (YS).

The protein belongs to the dihydroorotate dehydrogenase family. Type 2 subfamily. Monomer. The cofactor is FMN.

Its subcellular location is the cell membrane. It catalyses the reaction (S)-dihydroorotate + a quinone = orotate + a quinol. The protein operates within pyrimidine metabolism; UMP biosynthesis via de novo pathway; orotate from (S)-dihydroorotate (quinone route): step 1/1. Catalyzes the conversion of dihydroorotate to orotate with quinone as electron acceptor. The chain is Dihydroorotate dehydrogenase (quinone) from Rhizobium leguminosarum bv. trifolii (strain WSM2304).